An 877-amino-acid chain; its full sequence is GTPase activating protein homolog 2 (877 aa).

Residues Phe14–Asp285 enclose the F-BAR domain. A coiled-coil region spans residues Gln130–Gln214. Residues Val374–Leu560 form the Rho-GAP domain. 3 disordered regions span residues Asp589–Ser612, Leu644–Thr704, and Ala749–Thr800. Composition is skewed to low complexity over residues Asn593–Ser612, Ser653–Thr676, and Ala749–Thr779. A compositionally biased stretch (polar residues) spans Ile780–Thr800.

It is found in the cytoplasm. The protein localises to the contractile vacuole. Its function is as follows. Rho GTPase-activating protein involved in the signal transduction pathway. Regulator of the contractile vacuole network as well as involved in driving vacuole emptying. The polypeptide is GTPase activating protein homolog 2 (mgp2) (Dictyostelium discoideum (Social amoeba)).